The sequence spans 345 residues: Thylakoid lumenal 29 kDa protein, chloroplastic (345 aa).

It belongs to the peroxidase family.

The protein localises to the plastid. It localises to the chloroplast thylakoid lumen. This Solanum lycopersicum (Tomato) protein is Thylakoid lumenal 29 kDa protein, chloroplastic (CLEB3J9).